We begin with the raw amino-acid sequence, 196 residues long: Vascular-related unknown protein 2 (196 aa).

A disordered region spans residues 84–130 (ANNINTNPKKRRIIHQHKEEEEEELQKGEEEEEDEEDTASSPSNKTK). Acidic residues predominate over residues 103 to 121 (EEEEELQKGEEEEEDEEDT).

Its function is as follows. Involved in the regulation of plant growth. The protein is Vascular-related unknown protein 2 of Arabidopsis thaliana (Mouse-ear cress).